Here is a 401-residue protein sequence, read N- to C-terminus: L-threonine ammonia-lyase (401 aa).

At Lys51 the chain carries N6-(pyridoxal phosphate)lysine. Pyridoxal 5'-phosphate is bound by residues Asn78, 178-181 (GGGL), and Ser301. One can recognise an ACT domain in the interval 326-401 (FIETFVMDRP…AKGYEVRIVG (76 aa)).

It belongs to the serine/threonine dehydratase family. As to quaternary structure, homotetramer. The cofactor is pyridoxal 5'-phosphate.

It carries out the reaction L-threonine = 2-oxobutanoate + NH4(+). The enzyme catalyses L-serine = pyruvate + NH4(+). Its pathway is amino-acid biosynthesis; L-isoleucine biosynthesis; 2-oxobutanoate from L-threonine: step 1/1. With respect to regulation, activity is insensitive to allosteric regulators L-valine and L-isoleucine at low concentrations, while these L-amino acids are inhibitors at high concentrations. Is insensitive to ammonium chloride and AMP. Inhibited in the presence of aminoxyacetic acid (AOAA), an inhibitor of pyridoxal phosphate-dependent enzymes. Functionally, catalyzes the conversion of L-threonine to 2-oxobutanoate and ammonia. Can also use L-serine, but the catalytic efficiency toward L-threonine is about sixfold higher than that toward L-serine. Also shows weak activity toward L-allo-threonine, but cannot use the corresponding D-amino acids. Does not exhibit racemase activity toward various amino acids, including serine. Physiologically, is likely involved in the threonine-dependent pathway of isoleucine biosynthesis. This Thermotoga maritima (strain ATCC 43589 / DSM 3109 / JCM 10099 / NBRC 100826 / MSB8) protein is L-threonine ammonia-lyase.